Consider the following 130-residue polypeptide: Phosphoribosyl-AMP cyclohydrolase (130 aa).

Residue D78 participates in Mg(2+) binding. C79 contacts Zn(2+). Mg(2+)-binding residues include D80 and D82. 2 residues coordinate Zn(2+): C96 and C103.

Belongs to the PRA-CH family. As to quaternary structure, homodimer. Mg(2+) is required as a cofactor. The cofactor is Zn(2+).

It localises to the cytoplasm. It carries out the reaction 1-(5-phospho-beta-D-ribosyl)-5'-AMP + H2O = 1-(5-phospho-beta-D-ribosyl)-5-[(5-phospho-beta-D-ribosylamino)methylideneamino]imidazole-4-carboxamide. Its pathway is amino-acid biosynthesis; L-histidine biosynthesis; L-histidine from 5-phospho-alpha-D-ribose 1-diphosphate: step 3/9. Its function is as follows. Catalyzes the hydrolysis of the adenine ring of phosphoribosyl-AMP. In Nitrosospira multiformis (strain ATCC 25196 / NCIMB 11849 / C 71), this protein is Phosphoribosyl-AMP cyclohydrolase.